Consider the following 198-residue polypeptide: GTP-binding protein RHO1 (198 aa).

A GTP-binding site is contributed by 16 to 23 (GDGACGKT). The short motif at 38–46 (YVPTVFENY) is the Effector region element. Residues 63 to 67 (DTAGQ) and 121 to 124 (CKSD) each bind GTP. A Cysteine methyl ester modification is found at C195. The S-geranylgeranyl cysteine moiety is linked to residue C195. Residues 196 to 198 (VVL) constitute a propeptide, removed in mature form.

This sequence belongs to the small GTPase superfamily. Rho family.

The protein localises to the cell membrane. The chain is GTP-binding protein RHO1 (RHO1) from Candida albicans (strain SC5314 / ATCC MYA-2876) (Yeast).